The following is a 141-amino-acid chain: Nucleoside diphosphate kinase (141 aa).

Residues Lys-11, Phe-59, Arg-87, Thr-93, Arg-104, and Asn-114 each contribute to the ATP site. His-117 acts as the Pros-phosphohistidine intermediate in catalysis.

This sequence belongs to the NDK family. As to quaternary structure, homotetramer. The cofactor is Mg(2+).

It is found in the cytoplasm. It catalyses the reaction a 2'-deoxyribonucleoside 5'-diphosphate + ATP = a 2'-deoxyribonucleoside 5'-triphosphate + ADP. The enzyme catalyses a ribonucleoside 5'-diphosphate + ATP = a ribonucleoside 5'-triphosphate + ADP. Functionally, major role in the synthesis of nucleoside triphosphates other than ATP. The ATP gamma phosphate is transferred to the NDP beta phosphate via a ping-pong mechanism, using a phosphorylated active-site intermediate. The protein is Nucleoside diphosphate kinase of Neisseria gonorrhoeae (strain NCCP11945).